The primary structure comprises 804 residues: MGYNHKEIEKKWQNYWADNKTFKTSDNLGQKKFYALDMFPYPSGAGLHVGHPEGYTATDIVSRYKRMQGYNVLHPMGWDAFGLPAEQYALDTGNDPREFTKQNIQTFKRQIQELGFSYDWDREVNTTDPEYYKWTQWIFIQLYNKGLAYVDEVAVNWCPALGTVLSNEEVVDGVSERGGHPVYRRPMKQWVLKITEYADRLLEDLDELDWPESIKDMQRNWIGRSEGARVSFEIENKDASIDVFTTRPDTIYGTTFLVLSPEHSLVNEITSEDKLEAVKKYQEDSSKKSDLERTDLAKDKSGVFTGAYAINPLTGKKLPIWIADYVLSSYGTGAVMAVPAHDERDYEFASKFNLPINEVIAGGDIQKEAYTGVGEHINSGELNGLDNETAISKAIELLVAKGAGEKKVNYKLRDWLFSRQRYWGEPIPVIHWEDGTMTTVPEEELPLLLPETDEIKPSGTGESPLANIDEFVNVIDEKTGMKGRRETNTMPQWAGSCWYYLRYIDPHNSNMLADPEKLKHWLPVDLYIGGVEHAVLHLLYARFWHKVLYDLGVVPTKEPFQKLFNQGMILGEGNEKMSKSKGNVVNPDDIVDSHGADTLRLYEMFMGPLDAAIAWSENGLDGSRRFLDRVWRLFINEDGSLSNKIVENNDNGLDKVYNQTVKKVTEDFNTLNFNTAISQLMVFINDCYKAETIYQPYAEGFVKMLAPIAPHIGEELWDRLGNEDTITYQPWPTYDESLLVDSEVEIVVQVNGKVRAKLNIPKDTSKDEMEALALKDENVKLSIEGKDIKKVIAVPQKLVNIVAK.

Positions P40 to H51 match the 'HIGH' region motif. The 'KMSKS' region signature appears at K576–S580. K579 is a binding site for ATP.

Belongs to the class-I aminoacyl-tRNA synthetase family.

Its subcellular location is the cytoplasm. The catalysed reaction is tRNA(Leu) + L-leucine + ATP = L-leucyl-tRNA(Leu) + AMP + diphosphate. The sequence is that of Leucine--tRNA ligase from Staphylococcus haemolyticus (strain JCSC1435).